Here is a 149-residue protein sequence, read N- to C-terminus: Myoglobin (149 aa).

An N-acetylalanine modification is found at Ala-2. Positions 2–143 (ABWDKVNSVW…ICSDIEKEYK (142 aa)) constitute a Globin domain. Residue His-89 participates in heme b binding.

It belongs to the globin family. As to quaternary structure, monomeric.

It is found in the cytoplasm. Its subcellular location is the sarcoplasm. It carries out the reaction Fe(III)-heme b-[protein] + nitric oxide + H2O = Fe(II)-heme b-[protein] + nitrite + 2 H(+). The enzyme catalyses H2O2 + AH2 = A + 2 H2O. In terms of biological role, monomeric heme protein which primary function is to store oxygen and facilitate its diffusion within muscle tissues. Reversibly binds oxygen through a pentacoordinated heme iron and enables its timely and efficient release as needed during periods of heightened demand. Depending on the oxidative conditions of tissues and cells, and in addition to its ability to bind oxygen, it also has a nitrite reductase activity whereby it regulates the production of bioactive nitric oxide. Under stress conditions, like hypoxia and anoxia, it also protects cells against reactive oxygen species thanks to its pseudoperoxidase activity. The chain is Myoglobin (mb) from Hemitriakis japanica (Japanese topeshark).